We begin with the raw amino-acid sequence, 464 residues long: Argininosuccinate lyase (464 aa).

This sequence belongs to the lyase 1 family. Argininosuccinate lyase subfamily.

Its subcellular location is the cytoplasm. It carries out the reaction 2-(N(omega)-L-arginino)succinate = fumarate + L-arginine. The protein operates within amino-acid biosynthesis; L-arginine biosynthesis; L-arginine from L-ornithine and carbamoyl phosphate: step 3/3. This Pseudomonas putida (strain W619) protein is Argininosuccinate lyase.